Reading from the N-terminus, the 190-residue chain is Protein GrpE (190 aa).

The tract at residues 21–49 (DDLQEEVEATETEETVEEVIEETPEKSEL) is disordered. The span at 23 to 42 (LQEEVEATETEETVEEVIEE) shows a compositional bias: acidic residues.

This sequence belongs to the GrpE family. As to quaternary structure, homodimer.

The protein localises to the cytoplasm. Functionally, participates actively in the response to hyperosmotic and heat shock by preventing the aggregation of stress-denatured proteins, in association with DnaK and GrpE. It is the nucleotide exchange factor for DnaK and may function as a thermosensor. Unfolded proteins bind initially to DnaJ; upon interaction with the DnaJ-bound protein, DnaK hydrolyzes its bound ATP, resulting in the formation of a stable complex. GrpE releases ADP from DnaK; ATP binding to DnaK triggers the release of the substrate protein, thus completing the reaction cycle. Several rounds of ATP-dependent interactions between DnaJ, DnaK and GrpE are required for fully efficient folding. The chain is Protein GrpE from Streptococcus pyogenes serotype M3 (strain SSI-1).